The sequence spans 376 residues: Methionine import ATP-binding protein MetN 1 (376 aa).

The region spanning 34-273 is the ABC transporter domain; that stretch reads VRFINLGKTY…PQHEVSKTLL (240 aa). An ATP-binding site is contributed by 70-77; that stretch reads GRSGAGKS.

The protein belongs to the ABC transporter superfamily. Methionine importer (TC 3.A.1.24) family. The complex is composed of two ATP-binding proteins (MetN), two transmembrane proteins (MetI) and a solute-binding protein (MetQ).

It localises to the cell inner membrane. The enzyme catalyses L-methionine(out) + ATP + H2O = L-methionine(in) + ADP + phosphate + H(+). It catalyses the reaction D-methionine(out) + ATP + H2O = D-methionine(in) + ADP + phosphate + H(+). In terms of biological role, part of the ABC transporter complex MetNIQ involved in methionine import. Responsible for energy coupling to the transport system. This Pseudomonas syringae pv. tomato (strain ATCC BAA-871 / DC3000) protein is Methionine import ATP-binding protein MetN 1.